The following is a 449-amino-acid chain: SUPPRESSOR OF GAMMA RESPONSE 1 (449 aa).

One can recognise an NAC domain in the interval 58–211 (LPRGVKFDPS…DYVVSKIFYQ (154 aa)). A DNA-binding region spans residues 167-217 (RGCKKIMVLYGGKAVKTNWVMHQYHLGIEEDEKEGDYVVSKIFYQQPQQLV). A compositionally biased stretch (basic and acidic residues) spans 324–336 (DDKEEQEKDRDNE). The tract at residues 324 to 348 (DDKEEQEKDRDNENQGEEDPTWFDS) is disordered.

Phosphorylated in a DNA stress-independent manner. Hyperphosphorylated on SQ motifs upon double-strand breaks, H(2)O(2) or zeocin treatments. Hyperphosphorylation is required for SOG1 function, and unlike constitutive phosphorylation, is ATM dependent. In terms of tissue distribution, expressed in shoot and root apical meristems, in lateral root primordia, in the vasculature of young leaves and in the root stele.

It is found in the nucleus. Its function is as follows. Transcription factor regulating the transcriptional activation response to gamma irradiation. Required for stem-cell death induced by UVB or by gamma irradiation. Not required for ATM activation, but participates in pathways governed by both ATM and ATR sensor kinases. Involved in DNA damage response (DDR) system that regulates cell cycle arrest. Functional homolog of animal p53. Regulates SMR5 and SMR7 transcription. Regulates DNA repair and cytokinin signaling separately and plays a key role in controlling lateral root formation under genotoxic stress. In Arabidopsis thaliana (Mouse-ear cress), this protein is SUPPRESSOR OF GAMMA RESPONSE 1.